We begin with the raw amino-acid sequence, 693 residues long: Elongation factor G 1 (693 aa).

In terms of domain architecture, tr-type G spans 4-281 (NKLRNIGISA…AVTRFLPSPH (278 aa)). Residues 13–20 (AHIDSGKT), 80–84 (DTPGH), and 134–137 (NKCD) contribute to the GTP site.

Belongs to the TRAFAC class translation factor GTPase superfamily. Classic translation factor GTPase family. EF-G/EF-2 subfamily.

The protein resides in the cytoplasm. Its function is as follows. Catalyzes the GTP-dependent ribosomal translocation step during translation elongation. During this step, the ribosome changes from the pre-translocational (PRE) to the post-translocational (POST) state as the newly formed A-site-bound peptidyl-tRNA and P-site-bound deacylated tRNA move to the P and E sites, respectively. Catalyzes the coordinated movement of the two tRNA molecules, the mRNA and conformational changes in the ribosome. In Borrelia garinii subsp. bavariensis (strain ATCC BAA-2496 / DSM 23469 / PBi) (Borreliella bavariensis), this protein is Elongation factor G 1.